The sequence spans 210 residues: Protein GrpE (210 aa).

Belongs to the GrpE family. In terms of assembly, homodimer.

The protein resides in the cytoplasm. Functionally, participates actively in the response to hyperosmotic and heat shock by preventing the aggregation of stress-denatured proteins, in association with DnaK and GrpE. It is the nucleotide exchange factor for DnaK and may function as a thermosensor. Unfolded proteins bind initially to DnaJ; upon interaction with the DnaJ-bound protein, DnaK hydrolyzes its bound ATP, resulting in the formation of a stable complex. GrpE releases ADP from DnaK; ATP binding to DnaK triggers the release of the substrate protein, thus completing the reaction cycle. Several rounds of ATP-dependent interactions between DnaJ, DnaK and GrpE are required for fully efficient folding. This Rhizobium leguminosarum bv. trifolii (strain WSM2304) protein is Protein GrpE.